The primary structure comprises 226 residues: GTP-binding nuclear protein Ran (226 aa).

In terms of domain architecture, Small GTPase Ran-type spans 3-184 (DPISFKVILV…LSILRTLLND (182 aa)). 14–21 (DGATGKTT) serves as a coordination point for GTP. A switch-I region spans residues 33-41 (KQYISTIGV). GTP is bound by residues Gly70, 135–138 (NKCD), and 163–165 (SAK). Residues 70–86 (GQEKFGGLRDGYYVDSD) form a switch-II region.

This sequence belongs to the small GTPase superfamily. Ran family. In terms of assembly, found in a nuclear export complex with RanGTP, exportin and pre-miRNA.

The protein resides in the nucleus. In terms of biological role, GTP-binding protein involved in nucleocytoplasmic transport. Required for the import of protein into the nucleus and also for RNA export. Involved in chromatin condensation and control of cell cycle. This Giardia intestinalis (Giardia lamblia) protein is GTP-binding nuclear protein Ran.